The sequence spans 211 residues: Imidazole glycerol phosphate synthase subunit HisH (211 aa).

The region spanning 3–211 (VVAVIDYEMG…VSQVREKIAA (209 aa)) is the Glutamine amidotransferase type-1 domain. Cysteine 81 functions as the Nucleophile in the catalytic mechanism. Residues histidine 186 and glutamate 188 contribute to the active site.

Heterodimer of HisH and HisF.

Its subcellular location is the cytoplasm. It carries out the reaction 5-[(5-phospho-1-deoxy-D-ribulos-1-ylimino)methylamino]-1-(5-phospho-beta-D-ribosyl)imidazole-4-carboxamide + L-glutamine = D-erythro-1-(imidazol-4-yl)glycerol 3-phosphate + 5-amino-1-(5-phospho-beta-D-ribosyl)imidazole-4-carboxamide + L-glutamate + H(+). The enzyme catalyses L-glutamine + H2O = L-glutamate + NH4(+). Its pathway is amino-acid biosynthesis; L-histidine biosynthesis; L-histidine from 5-phospho-alpha-D-ribose 1-diphosphate: step 5/9. Functionally, IGPS catalyzes the conversion of PRFAR and glutamine to IGP, AICAR and glutamate. The HisH subunit catalyzes the hydrolysis of glutamine to glutamate and ammonia as part of the synthesis of IGP and AICAR. The resulting ammonia molecule is channeled to the active site of HisF. This Nostoc sp. (strain PCC 7120 / SAG 25.82 / UTEX 2576) protein is Imidazole glycerol phosphate synthase subunit HisH.